The chain runs to 166 residues: MFLGYSDCVDPGLAVYRVSRSRLKLMLSFVWLVGLRFHDCAAFESCCYDITEAESNKAISRDEAAFTSSVSTRTPSLAIAPPPDRSMLLSREEELVPWSRLIITKQFYGGLIFHTTWVTGFVLLGLLTLFASLFRVPQSICRFCIDRLRDIARPLKYRYQRLVATV.

As to quaternary structure, interacts with host IQGAP1.

The protein resides in the host cytoplasm. Its function is as follows. May play a role in rearrangement of cellular cytoskeleton towards an efficient viral assembly and spreading. This is Protein UL5 (UL5) from Human cytomegalovirus (strain Merlin) (HHV-5).